The primary structure comprises 610 residues: MAPKDSQVSASNEMTGNPPSSVQGRSRNGCITCRIRRVKCDEERPHCRRCQSTGRKCDGYTPLTGQQPKQQPPQQAAKAGSSELRIIQHTPQVTQPTQLCMFPGVDTLLTEDEYRALEFFNVQTVSCFGPRAGGWLLNAACQDSAIRRAAMALGTMHRVVLYHSRTPPHDRRRGMQLALQQYNSAIRQGLKLFAGSNDSSADGILSMCVLFFCLDSLQGHFRSALRHVGSGLRILAQRQLRGQRAENTLLPPDVIQSLFAALEAQMLEIDGQSPLLDENGLPVRGAGRPAPLWTLEEAQDTFRSIYNDFLRLLSFSARLEEPVDELEMVQIVEQVMARKQQVQTDLDAWSLEFDHFLAHIFHWGNQASQQSVRMLQLWRTMLTMVLHMGWPPQDTAWGSHLSELNIILDLAEQIIVMSPPLELESSAGSTFSLQGHSRAGSPSGSRSRSMSTSSSASRDDSPTTTTTTTTTPTPRLKKETDPQSTYTPILPRPFHSSPSRFTLALGILPALWTIATQCRDSSVRYRAIDLIGRSKRREGVWDSDLHFRLALQLARHEEQAAGLDAGAEYTHARIPPEARVTLNGRFDEGRKAKISYIRENVRVGEEIFHW.

Polar residues predominate over residues 1–26 (MAPKDSQVSASNEMTGNPPSSVQGRS). Residues 1-27 (MAPKDSQVSASNEMTGNPPSSVQGRSR) form a disordered region. Residues 30-57 (CITCRIRRVKCDEERPHCRRCQSTGRKC) constitute a DNA-binding region (zn(2)-C6 fungal-type). Disordered stretches follow at residues 61 to 81 (TPLT…KAGS) and 427 to 493 (AGST…LPRP). Composition is skewed to low complexity over residues 66–79 (QQPK…AAKA) and 437–474 (SRAG…TPTP).

Its subcellular location is the nucleus. Functionally, transcription factor that positively regulates the cluster that mediate the production of aspercryptins, linear lipopeptides built from six amino acids including 2 highly unusual and nonproteogenic amino acids, 2-amino-octanoic acid (2aoa) and 2-amino-dodecanol (2adol). The polypeptide is Aspercryptin biosynthesis cluster-specific transcription regulator atnN (Emericella nidulans (strain FGSC A4 / ATCC 38163 / CBS 112.46 / NRRL 194 / M139) (Aspergillus nidulans)).